The primary structure comprises 500 residues: Transcription termination/antitermination protein NusA (500 aa).

Positions 135-205 constitute an S1 motif domain; the sequence is GEIVTGVVKK…RGAQLFVTRS (71 aa). A KH domain is found at 307-373; the sequence is KHTMDIAVEA…FTKYLDIDEE (67 aa). 2 consecutive repeat copies span residues 369–419 and 444–494. A 2 X 51 AA approximate repeats region spans residues 369–494; that stretch reads DIDEEFATVL…ELIMAARNIC (126 aa).

It belongs to the NusA family. In terms of assembly, monomer. Binds directly to the core enzyme of the DNA-dependent RNA polymerase and to nascent RNA.

It localises to the cytoplasm. In terms of biological role, participates in both transcription termination and antitermination. This Salmonella typhimurium (strain LT2 / SGSC1412 / ATCC 700720) protein is Transcription termination/antitermination protein NusA.